We begin with the raw amino-acid sequence, 160 residues long: E3 ubiquitin ligase complex SCF subunit sconC (160 aa).

An interaction with the F-box domain of F-box proteins region spans residues 101–160 (ILAANYLDIKALLDVGCKTVANMIKGKSPEEIRKTFNIQNDFTPEEEDQIRRENEWAEDR).

The protein belongs to the SKP1 family. As to quaternary structure, component of the SCF (SKP1-CUL1-F-box protein) E3 ubiquitin ligase complexes.

The protein operates within protein modification; protein ubiquitination. In terms of biological role, essential component of the SCF (SKP1-CUL1-F-box protein) E3 ubiquitin ligase complexes, which mediate the ubiquitination and subsequent proteasomal degradation of target proteins. Controls sulfur metabolite repression, probably by mediating the inactivation or degradation of the metR transcription factor. The chain is E3 ubiquitin ligase complex SCF subunit sconC (sconC) from Talaromyces stipitatus (strain ATCC 10500 / CBS 375.48 / QM 6759 / NRRL 1006) (Penicillium stipitatum).